A 793-amino-acid chain; its full sequence is Netrin-B (793 aa).

A signal peptide spans 1-22 (MVRATGTRMGLLLPIILALAIG). Residues 39–303 (KPRKCLPSFV…NLQDNDSADA (265 aa)) form the Laminin N-terminal domain. Asparagine 103, asparagine 125, and asparagine 298 each carry an N-linked (GlcNAc...) asparagine glycan. Residues 332-378 (SVVKRQGKHKGSAYEKHYQSKLAATTPPQQPPKVTPPGKVTPPSTAA) are disordered. Over residues 367-378 (PPGKVTPPSTAA) the composition is skewed to low complexity. Intrachain disulfides connect cysteine 405-cysteine 414, cysteine 407-cysteine 461, cysteine 463-cysteine 472, cysteine 475-cysteine 495, cysteine 498-cysteine 507, cysteine 500-cysteine 525, cysteine 528-cysteine 537, cysteine 540-cysteine 558, cysteine 561-cysteine 573, cysteine 563-cysteine 580, cysteine 582-cysteine 591, cysteine 594-cysteine 608, cysteine 649-cysteine 738, cysteine 652-cysteine 740, and cysteine 665-cysteine 792. 3 consecutive Laminin EGF-like domains span residues 405–497 (CKCN…ECKM), 498–560 (CQCN…VCKR), and 561–610 (CDCH…PCIK). A disordered region spans residues 420–446 (SGSGTALSDQDDGQDEDTPSAPSLANH). Positions 428–437 (DQDDGQDEDT) are enriched in acidic residues. In terms of domain architecture, NTR spans 649–792 (CGKCKASPKK…KRFQRRARKC (144 aa)). N-linked (GlcNAc...) asparagine glycosylation is present at asparagine 746.

Binds to unc-5 and fra receptors. At 24 hr after puparium formation (APF), detected in the most anterior (oldest) L3, L4 and L5 lamina neurons (at protein level). At 48 hr APF, expressed in all L3, L4 and L5 neurons with slightly higher expression in the L3 neurons (at protein level). At the midline of developing CNS and in different subsets of neurons, muscles, and epidermal patches.

Its subcellular location is the secreted. The protein localises to the extracellular space. The protein resides in the extracellular matrix. It localises to the cytoplasm. It is found in the perinuclear region. Functionally, netrins control guidance of CNS commissural axons and peripheral motor axons. Its association with either fra or unc-5 receptors will lead to axon attraction or repulsion, respectively. While short-range repulsion requires both fra and unc-5 receptors, long-range repulsion only requires unc-5. The protein is Netrin-B (NetB) of Drosophila melanogaster (Fruit fly).